The primary structure comprises 248 residues: Homeobox protein CHOX-CAD (248 aa).

A DNA-binding region (homeobox) is located at residues 137–196; sequence KDKYRVVYTDHQRLELEKEFHYSRYITIRRKAELAAALGLTERQVKIWFQNRRAKERKVN. A disordered region spans residues 192-248; the sequence is ERKVNKKKLQQQSQPTSTTTPTPPAVGTPGPMGTLCSGSAPSLVSSSPLTIKEEFMP. Low complexity-rich tracts occupy residues 201 to 211 and 228 to 240; these read QQQSQPTSTTT and SGSAPSLVSSSPL.

This sequence belongs to the Caudal homeobox family.

The protein localises to the nucleus. Functionally, may play an important role during the early steps of organogenesis. This chain is Homeobox protein CHOX-CAD (CHOX-CAD1), found in Gallus gallus (Chicken).